Here is a 350-residue protein sequence, read N- to C-terminus: Protein RecA (350 aa).

Glycine 67–threonine 74 lines the ATP pocket.

Belongs to the RecA family.

It is found in the cytoplasm. Functionally, can catalyze the hydrolysis of ATP in the presence of single-stranded DNA, the ATP-dependent uptake of single-stranded DNA by duplex DNA, and the ATP-dependent hybridization of homologous single-stranded DNAs. It interacts with LexA causing its activation and leading to its autocatalytic cleavage. This chain is Protein RecA, found in Mycobacterium avium (strain 104).